The chain runs to 408 residues: Aminopeptidase T (408 aa).

Residues Glu-250, Glu-316, Glu-340, His-345, His-376, and Asp-378 each coordinate a divalent metal cation.

Belongs to the peptidase M29 family. Homodimer. It depends on Co(2+) as a cofactor. Requires Zn(2+) as cofactor. The cofactor is Mg(2+).

Functionally, metal-dependent exopeptidase. This is Aminopeptidase T from Thermus thermophilus (strain ATCC 27634 / DSM 579 / HB8).